The primary structure comprises 610 residues: Elongation factor 4 (610 aa).

One can recognise a tr-type G domain in the interval 11-193 (EKIRNFSIIA…QIVEKVPAPT (183 aa)). GTP-binding positions include 23 to 28 (DHGKST) and 140 to 143 (NKID).

This sequence belongs to the TRAFAC class translation factor GTPase superfamily. Classic translation factor GTPase family. LepA subfamily.

The protein localises to the cell membrane. The enzyme catalyses GTP + H2O = GDP + phosphate + H(+). Required for accurate and efficient protein synthesis under certain stress conditions. May act as a fidelity factor of the translation reaction, by catalyzing a one-codon backward translocation of tRNAs on improperly translocated ribosomes. Back-translocation proceeds from a post-translocation (POST) complex to a pre-translocation (PRE) complex, thus giving elongation factor G a second chance to translocate the tRNAs correctly. Binds to ribosomes in a GTP-dependent manner. The chain is Elongation factor 4 from Streptococcus pyogenes serotype M6 (strain ATCC BAA-946 / MGAS10394).